A 315-amino-acid polypeptide reads, in one-letter code: Zinc metalloproteinase nas-4 (315 aa).

The signal sequence occupies residues 1 to 20; sequence MMTIQRYSLVFCAIFATCWT. N-linked (GlcNAc...) asparagine glycosylation is present at asparagine 71. The region spanning 95–290 is the Peptidase M12A domain; it reads NAIKQIYRRW…RKINKLYNCP (196 aa). Disulfide bonds link cysteine 137-cysteine 289 and cysteine 160-cysteine 179. Histidine 187 is a binding site for Zn(2+). Glutamate 188 is a catalytic residue. Residues histidine 191 and histidine 197 each coordinate Zn(2+). The disordered stretch occupies residues 291 to 315; it reads GVSGNNNNNNNNQINSNSIVNHPQV.

It depends on Zn(2+) as a cofactor. In terms of tissue distribution, digestive tract. Found in the pharynx cells of the procorpus, metacorpus, isthmus and terminal bulb, and in the terminal bulb lumen.

The protein localises to the secreted. Metalloprotease. May be involved in digestion. The sequence is that of Zinc metalloproteinase nas-4 (nas-4) from Caenorhabditis elegans.